A 374-amino-acid chain; its full sequence is 1,3,6,8-tetrahydroxynaphthalene synthase (374 aa).

C138 is a catalytic residue.

Belongs to the thiolase-like superfamily. Chalcone/stilbene synthases family. Homodimer.

The enzyme catalyses 5 malonyl-CoA + 5 H(+) = naphthalene-1,3,6,8-tetrol + 5 CO2 + 5 CoA + H2O. It functions in the pathway pigment biosynthesis; melanin biosynthesis. Functionally, involved in the biosynthesis of melanin but also various secondary metabolites containing a naphthoquinone ring. Catalyzes the iterative condensation of five CoA-linked malonyl units to form a pentaketide intermediate. THNS subsequently catalyzes the dual intramolecular Claisen and aldol condensations of this linear intermediate to produce the fused ring of 1,3,6,8-tetrahydroxynaphthalene (THN). The polypeptide is 1,3,6,8-tetrahydroxynaphthalene synthase (Streptomyces coelicolor (strain ATCC BAA-471 / A3(2) / M145)).